Here is a 135-residue protein sequence, read N- to C-terminus: UPF0306 protein C8J_1355 (135 aa).

This sequence belongs to the UPF0306 family.

The chain is UPF0306 protein C8J_1355 from Campylobacter jejuni subsp. jejuni serotype O:6 (strain 81116 / NCTC 11828).